The primary structure comprises 268 residues: NH(3)-dependent NAD(+) synthetase (268 aa).

Residue 46-53 coordinates ATP; that stretch reads GISGGQDS. D52 contributes to the Mg(2+) binding site. Position 140 (R140) interacts with deamido-NAD(+). ATP is bound at residue T160. A Mg(2+)-binding site is contributed by E165. K173 and D180 together coordinate deamido-NAD(+). Residues K189 and T211 each contribute to the ATP site. Deamido-NAD(+) is bound at residue 260–261; the sequence is HK.

It belongs to the NAD synthetase family. Homodimer.

The enzyme catalyses deamido-NAD(+) + NH4(+) + ATP = AMP + diphosphate + NAD(+) + H(+). It functions in the pathway cofactor biosynthesis; NAD(+) biosynthesis; NAD(+) from deamido-NAD(+) (ammonia route): step 1/1. In terms of biological role, catalyzes the ATP-dependent amidation of deamido-NAD to form NAD. Uses ammonia as a nitrogen source. The chain is NH(3)-dependent NAD(+) synthetase from Buchnera aphidicola subsp. Schizaphis graminum (strain Sg).